The following is a 466-amino-acid chain: 3-isopropylmalate dehydratase large subunit (466 aa).

[4Fe-4S] cluster is bound by residues Cys-347, Cys-407, and Cys-410.

Belongs to the aconitase/IPM isomerase family. LeuC type 1 subfamily. As to quaternary structure, heterodimer of LeuC and LeuD. It depends on [4Fe-4S] cluster as a cofactor.

The enzyme catalyses (2R,3S)-3-isopropylmalate = (2S)-2-isopropylmalate. It participates in amino-acid biosynthesis; L-leucine biosynthesis; L-leucine from 3-methyl-2-oxobutanoate: step 2/4. Its function is as follows. Catalyzes the isomerization between 2-isopropylmalate and 3-isopropylmalate, via the formation of 2-isopropylmaleate. In Vibrio campbellii (strain ATCC BAA-1116), this protein is 3-isopropylmalate dehydratase large subunit.